The sequence spans 59 residues: Protein translocase subunit SecE (59 aa).

A helical transmembrane segment spans residues 37 to 57 (GIGIIIIGVIGFIISIIAQLL).

The protein belongs to the SecE/SEC61-gamma family. As to quaternary structure, component of the Sec protein translocase complex. Heterotrimer consisting of SecY (alpha), SecG (beta) and SecE (gamma) subunits. The heterotrimers can form oligomers, although 1 heterotrimer is thought to be able to translocate proteins. Interacts with the ribosome. May interact with SecDF, and other proteins may be involved.

The protein localises to the cell membrane. Its function is as follows. Essential subunit of the Sec protein translocation channel SecYEG. Clamps together the 2 halves of SecY. May contact the channel plug during translocation. In Methanothermobacter thermautotrophicus (strain ATCC 29096 / DSM 1053 / JCM 10044 / NBRC 100330 / Delta H) (Methanobacterium thermoautotrophicum), this protein is Protein translocase subunit SecE.